The sequence spans 255 residues: 4-hydroxy-tetrahydrodipicolinate reductase (255 aa).

NAD(+) contacts are provided by residues 9–14, D35, 89–91, and 115–118; these read GFKGKM, GTT, and APNF. H145 (proton donor/acceptor) is an active-site residue. H146 is a binding site for (S)-2,3,4,5-tetrahydrodipicolinate. K149 acts as the Proton donor in catalysis. 155–156 contacts (S)-2,3,4,5-tetrahydrodipicolinate; that stretch reads GT.

This sequence belongs to the DapB family.

The protein localises to the cytoplasm. The enzyme catalyses (S)-2,3,4,5-tetrahydrodipicolinate + NAD(+) + H2O = (2S,4S)-4-hydroxy-2,3,4,5-tetrahydrodipicolinate + NADH + H(+). The catalysed reaction is (S)-2,3,4,5-tetrahydrodipicolinate + NADP(+) + H2O = (2S,4S)-4-hydroxy-2,3,4,5-tetrahydrodipicolinate + NADPH + H(+). It participates in amino-acid biosynthesis; L-lysine biosynthesis via DAP pathway; (S)-tetrahydrodipicolinate from L-aspartate: step 4/4. In terms of biological role, catalyzes the conversion of 4-hydroxy-tetrahydrodipicolinate (HTPA) to tetrahydrodipicolinate. The chain is 4-hydroxy-tetrahydrodipicolinate reductase from Streptococcus pneumoniae serotype 4 (strain ATCC BAA-334 / TIGR4).